The sequence spans 121 residues: MARIAGVDIPRDKRVEVSLTYIYGIGLTRAKAILAKAGVNPDIRVKDLEDGDIQKLRGATEAFTIEGDLRRQEGMALKRLQDIGCVRGRRHRMSLPVRGQRTRTNARTRRGARKTVAGKKK.

Positions 97-121 (VRGQRTRTNARTRRGARKTVAGKKK) are disordered. Over residues 100–121 (QRTRTNARTRRGARKTVAGKKK) the composition is skewed to basic residues.

It belongs to the universal ribosomal protein uS13 family. In terms of assembly, part of the 30S ribosomal subunit. Forms a loose heterodimer with protein S19. Forms two bridges to the 50S subunit in the 70S ribosome.

Functionally, located at the top of the head of the 30S subunit, it contacts several helices of the 16S rRNA. In the 70S ribosome it contacts the 23S rRNA (bridge B1a) and protein L5 of the 50S subunit (bridge B1b), connecting the 2 subunits; these bridges are implicated in subunit movement. Contacts the tRNAs in the A and P-sites. This chain is Small ribosomal subunit protein uS13, found in Synechococcus sp. (strain CC9902).